A 569-amino-acid chain; its full sequence is Laccase-6 (569 aa).

The N-terminal stretch at 1–29 (MTSSAVPSLFRLSFLLFTLQVMNIGRIGA) is a signal peptide. Plastocyanin-like domains lie at 37 to 153 (KVQT…PKAS) and 163 to 315 (NEHT…YIGA). N-linked (GlcNAc...) asparagine glycosylation occurs at asparagine 83. Residues histidine 87, histidine 89, histidine 132, and histidine 134 each contribute to the Cu cation site. Residues asparagine 208, asparagine 303, asparagine 319, asparagine 392, asparagine 438, and asparagine 444 are each glycosylated (N-linked (GlcNAc...) asparagine). One can recognise a Plastocyanin-like 3 domain in the interval 417 to 553 (DFPTTPEKAY…STMFIVKNGK (137 aa)). Cu cation is bound by residues histidine 472, histidine 475, histidine 477, histidine 532, cysteine 533, histidine 534, histidine 538, and methionine 543.

This sequence belongs to the multicopper oxidase family. The cofactor is Cu cation. As to expression, predominantly expressed in the inflorescence stem, but not in siliques.

It is found in the secreted. It localises to the extracellular space. The protein resides in the apoplast. It catalyses the reaction 4 hydroquinone + O2 = 4 benzosemiquinone + 2 H2O. In terms of biological role, lignin degradation and detoxification of lignin-derived products. In Arabidopsis thaliana (Mouse-ear cress), this protein is Laccase-6 (LAC6).